We begin with the raw amino-acid sequence, 430 residues long: Microtubule-associated protein tau (430 aa).

Positions 1 to 16 (MAEPRQEFDTAEDHAE) are enriched in basic and acidic residues. A disordered region spans residues 1–245 (MAEPRQEFDT…PVPMPDLKNV (245 aa)). A2 carries the N-acetylalanine modification. At Y18 the chain carries Phosphotyrosine. K31 is covalently cross-linked (Glycyl lysine isopeptide (Lys-Gly) (interchain with G-Cter in ubiquitin)). Residues S33 and S48 each carry the phosphoserine modification. A compositionally biased stretch (polar residues) spans 48–58 (SETSDAKSTPT). 3 positions are modified to phosphothreonine: T56, T58, and T98. The segment covering 117-133 (KGKEGTGSEDRKAKGAD) has biased composition (basic and acidic residues). A Phosphothreonine modification is found at T142. At R144 the chain carries Omega-N-methylarginine. K152 is subject to N6,N6-dimethyllysine; alternate. N6-acetyllysine; alternate is present on K152. Residues T158, T164, T165, and T170 each carry the phosphothreonine modification. Positions 161 to 203 (PAKTTPSPKTPPGTGEPAKSGDRSGYSSPGSPGTPGSRSRTPS) are enriched in low complexity. A phosphoserine mark is found at S180 and S184. Y186 carries the phosphotyrosine modification. Phosphoserine occurs at positions 187, 188, and 191. 2 positions are modified to phosphothreonine: T194 and T201. The residue at position 203 (S203) is a Phosphoserine. Residue T206 is modified to Phosphothreonine. K214 carries the N6-acetyllysine modification. A Phosphothreonine modification is found at T220. 2 positions are modified to phosphoserine: S224 and S226. 4 Tau/MAP repeats span residues 233–263 (QTAP…GGGK), 264–294 (VQII…GGGS), 295–325 (VQIV…GGGQ), and 326–357 (VEVK…GGGN). K243 participates in a covalent cross-link: Glycyl lysine isopeptide (Lys-Gly) (interchain with G-Cter in ubiquitin). At K248 the chain carries N6-acetyllysine; alternate. K248 bears the N6-methyllysine; alternate mark. Residue K248 forms a Glycyl lysine isopeptide (Lys-Gly) (interchain with G-Cter in ubiquitin); alternate linkage. S251 is subject to Phosphoserine. A Glycyl lysine isopeptide (Lys-Gly) (interchain with G-Cter in ubiquitin) cross-link involves residue K256. The residue at position 270 (K270) is an N6-acetyllysine; alternate. A Glycyl lysine isopeptide (Lys-Gly) (interchain with G-Cter in ubiquitin); alternate cross-link involves residue K270. S274 and S278 each carry phosphoserine. K279 carries the N6-acetyllysine modification. Cysteines 280 and 311 form a disulfide. At S282 the chain carries Phosphoserine. Residue K287 is modified to N6-acetyllysine; alternate. K287 is covalently cross-linked (Glycyl lysine isopeptide (Lys-Gly) (interchain with G-Cter in ubiquitin); alternate). Phosphoserine is present on S294. K300 carries the N6,N6-dimethyllysine; alternate modification. N6-acetyllysine; alternate occurs at positions 300, 306, and 310. Residues K300, K306, and K310 each participate in a glycyl lysine isopeptide (Lys-Gly) (interchain with G-Cter in ubiquitin); alternate cross-link. S313 is modified (phosphoserine). Residues K320, K332, and K336 each carry the N6-acetyllysine; alternate modification. Residues K320, K332, and K336 each participate in a glycyl lysine isopeptide (Lys-Gly) (interchain with G-Cter in ubiquitin); alternate cross-link. Omega-N-methylarginine is present on R338. The residue at position 341 (S341) is a Phosphoserine. K342 participates in a covalent cross-link: Glycyl lysine isopeptide (Lys-Gly) (interchain with G-Cter in ubiquitin). S345 is subject to Phosphoserine. K358 carries the N6-acetyllysine; alternate modification. Residue K358 forms a Glycyl lysine isopeptide (Lys-Gly) (interchain with G-Cter in ubiquitin); alternate linkage. K364 participates in a covalent cross-link: Glycyl lysine isopeptide (Lys-Gly) (interchain with G-Cter in ubiquitin). The residue at position 374 (K374) is an N6-acetyllysine; alternate. K374 participates in a covalent cross-link: Glycyl lysine isopeptide (Lys-Gly) (interchain with G-Cter in ubiquitin); alternate. At Y383 the chain carries Phosphotyrosine. S385 and S389 each carry phosphoserine. Positions 387-406 (VVSGDTSPRHLSNVSSTGSI) are disordered. Polar residues predominate over residues 390 to 406 (GDTSPRHLSNVSSTGSI). T392 is modified (phosphothreonine). A phosphoserine mark is found at S393, S398, S405, and S411. Position 416 is a phosphothreonine (T416).

As to quaternary structure, interacts with MARK1, MARK2, MARK3 and MARK4. Interacts with SQSTM1 when polyubiquitinated. Interacts with PSMC2 through SQSTM1. Interacts with FKBP4. Binds to CSNK1D. Interacts with SGK1. Interacts with PIN1. Interacts with LRRK2. Interacts with LRP1, leading to endocytosis; this interaction is reduced in the presence of LRPAP1/RAP. Post-translationally, polyubiquitinated. Requires functional TRAF6 and may provoke SQSTM1-dependent degradation by the proteasome. Phosphorylation at various serine and threonine residues in S-P or T-P motifs by proline-directed protein kinases (PDPK1, CDK1, CDK5, GSK3, MAPK) (a few sites per protein in interphase, more in mitosis), and at serine residues in K-X-G-S motifs by MAP/microtubule affinity-regulating kinase (MARK1, MARK2, MARK3 or MARK4), causing detachment from microtubules, and their disassembly. Phosphorylation at Ser-345 by BRSK1 and BRSK2 in neurons affects ability to bind microtubules and plays a role in neuron polarization. Phosphorylated by PHK. Dephosphorylation at several serine and threonine residues by the serine/threonine phosphatase PPP5C. In terms of processing, hyperphosphorylated (in particular at Thr-170, Ser-191, Thr-194, Ser-251, and Ser-345) during hibernation. Phosphorylation is fully reversible after arousal. Highly phosphorylated tau contains a number of paired helical filaments (PHFs)-like epitopes. PHF-like phosphorylation is not associated with fibril formation. Distribution of PHF-like tau is more intense in the entorhinal cortex, hippocampus and isocortical areas. PHF-like phosphorylation-dephosphorylation during hibernation cycle is synchronized with regression-re-establishment of afferentation. It may reflect a protective mechanism in an unfavorable environment.

It is found in the cytoplasm. The protein localises to the cytosol. Its subcellular location is the cell membrane. It localises to the cytoskeleton. The protein resides in the cell projection. It is found in the axon. The protein localises to the dendrite. Promotes microtubule assembly and stability, and might be involved in the establishment and maintenance of neuronal polarity. The C-terminus binds axonal microtubules while the N-terminus binds neural plasma membrane components, suggesting that tau functions as a linker protein between both. Axonal polarity is predetermined by tau localization (in the neuronal cell) in the domain of the cell body defined by the centrosome. The short isoforms allow plasticity of the cytoskeleton whereas the longer isoforms may preferentially play a role in its stabilization. This Spermophilus citellus (European ground squirrel) protein is Microtubule-associated protein tau (MAPT).